Reading from the N-terminus, the 703-residue chain is Calpain-8 (703 aa).

The Calpain catalytic domain occupies 45–344; that stretch reads LFKDPEFPAC…FSRLEICNLS (300 aa). Residues Cys105, His262, and Asn286 contribute to the active site. The tract at residues 355-512 is domain III; it reads KWNLVLFNGR…VFSEKKAQAL (158 aa). The tract at residues 513-531 is linker; that stretch reads EIGDAVPGDPHEPHPRDMD. EF-hand domains lie at 531–566, 575–610, 605–640, and 670–703; these read DGEDEHFWSLSEEFADKDSEISAHQLKRVLNGLLSK, FNINTCREMISLLDGDGTGSLRPVEFKTLWLKICKY, LKICKYLEIYQEMDHSRAGTIDAHEMRTALKKAGFT, and IRLEILFKLFRLLDKDQNGIVQLSLAEWLCRALV. The tract at residues 532-703 is domain IV; that stretch reads GEDEHFWSLS…LAEWLCRALV (172 aa). Ca(2+) contacts are provided by Asp588, Asp590, Thr592, Ser594, Glu599, Asp618, Ser620, Thr624, and Glu629.

It belongs to the peptidase C2 family. Monomer and homooligomer. Interacts with COPS1/GPS1, COPB1, EYA2, NME2, NME4 and TOMM70. Ca(2+) serves as cofactor. Undergoes autolytic cleavage between Ala-5 and Ala-6 which gives rise to fragments extending from Ala-6 to the C-terminus, Ala-6 to the EF-hand 2 domain and from Ala-6 to the beginning of domain III. In terms of tissue distribution, predominantly expressed in the stomach. Localizes strictly to the surface mucus cells in the gastric epithelium and the mucus-secreting goblet cells in the duodenum.

It localises to the cytoplasm. The protein resides in the golgi apparatus. The enzyme catalyses Broad endopeptidase specificity.. The concentration of calcium for half-maximal activity is 0.3 mM. Inhibited by calpastatin and calpeptin. In terms of biological role, calcium-regulated non-lysosomal thiol-protease. Involved in membrane trafficking in the gastric surface mucus cells (pit cells) and may involve the membrane trafficking of mucus cells via interactions with coat protein. Proteolytically cleaves the beta-subunit of coatomer complex. The protein is Calpain-8 (Capn8) of Mus musculus (Mouse).